Here is a 372-residue protein sequence, read N- to C-terminus: Lipoyl synthase, mitochondrial (372 aa).

A mitochondrion-targeting transit peptide spans 1 to 27; that stretch reads MSLRCGDAARTLGPRVFGRYFCSPVRP. Residues Cys-106, Cys-111, Cys-117, Cys-137, Cys-141, Cys-144, and Ser-352 each coordinate [4Fe-4S] cluster. The Radical SAM core domain maps to 122–341; it reads EYATATATIM…EKVGNELGFH (220 aa).

The protein belongs to the radical SAM superfamily. Lipoyl synthase family. [4Fe-4S] cluster serves as cofactor.

It is found in the mitochondrion. It carries out the reaction [[Fe-S] cluster scaffold protein carrying a second [4Fe-4S](2+) cluster] + N(6)-octanoyl-L-lysyl-[protein] + 2 oxidized [2Fe-2S]-[ferredoxin] + 2 S-adenosyl-L-methionine + 4 H(+) = [[Fe-S] cluster scaffold protein] + N(6)-[(R)-dihydrolipoyl]-L-lysyl-[protein] + 4 Fe(3+) + 2 hydrogen sulfide + 2 5'-deoxyadenosine + 2 L-methionine + 2 reduced [2Fe-2S]-[ferredoxin]. It participates in protein modification; protein lipoylation via endogenous pathway; protein N(6)-(lipoyl)lysine from octanoyl-[acyl-carrier-protein]: step 2/2. Its function is as follows. Catalyzes the radical-mediated insertion of two sulfur atoms into the C-6 and C-8 positions of the octanoyl moiety bound to the lipoyl domains of lipoate-dependent enzymes, thereby converting the octanoylated domains into lipoylated derivatives. The chain is Lipoyl synthase, mitochondrial from Homo sapiens (Human).